The chain runs to 401 residues: Probable thioesterase FGSG_00047 (401 aa).

Positions 379–401 are disordered; that stretch reads AREMDQRKRQKDFTHTTIHDKNS.

Belongs to the AMT4 thioesterase family.

The protein operates within mycotoxin biosynthesis. Its function is as follows. Probable thioesterase; part of the gene cluster that mediates the biosynthesis of gramillins A and B, bicyclic lipopeptides that induce cell death in maize leaves but not in wheat leaves. The nonribosomal peptide synthetase GRA1 incorporates respectively a glutamic adic (Glu), a leucine (Leu), a serine (Ser), a hydroxyglutamine (HOGln), a 2-amino decanoic acid, and 2 cysteins (CysB and CysA). The biosynthesis of 2-amino decanoic acid incorporated in gramillins could be initiated by a fatty acid synthase composed of the alpha and beta subunits FGSG_00036 and FGSG_11656. The cytochrome P450 monooxygenase FGSG_15680 could hydroxylate the fatty acid chain. Subsequent oxidation to the ketone by the oxidoreductase FGSG_00048 and transamination by aminotransferase FGSG_00049 could form 2-amino-decanoic acid. On the other hand, FGSG_15680 could also be responsible for the HO-modified glutamine at the gamma-position. Whether hydroxylation occurs on the fully assembled product or on the Gln residue prior to assembly into the gramillins requires further proof. The thioredoxin FGSG_00043 could also be required for the disulfide-bond formation between CysA and CysB. The specific involvement of the remaining proteins from the cluster is more difficult to discern, but could have broader regulatory (FGSG_00040 and FGSG_11657) or enzymatic functions (FGSG_00044 and FGSG_00045). The final C-domain of GRA1 does not possess the expected sequence of a termination CT domain, often implicated in macrocyclization and release of a cyclopeptidein fungal NRPs; and the thioesterase FGSG_00047 may act in concert with the terminal C-domain of GRA1 to catalyze the formation of the macrocyclic anhydride and release of the products. This is Probable thioesterase FGSG_00047 from Gibberella zeae (strain ATCC MYA-4620 / CBS 123657 / FGSC 9075 / NRRL 31084 / PH-1) (Wheat head blight fungus).